The chain runs to 361 residues: [LysW]-lysine hydrolase (361 aa).

His67 provides a ligand contact to Zn(2+). Residue Asp69 is part of the active site. Residue Asp91 coordinates Zn(2+). Glu124 functions as the Proton acceptor in the catalytic mechanism. Zn(2+)-binding residues include Glu125, Glu148, and His326.

The protein belongs to the peptidase M20A family. LysK subfamily. The cofactor is Zn(2+). It depends on Co(2+) as a cofactor.

Its subcellular location is the cytoplasm. The enzyme catalyses [amino-group carrier protein]-C-terminal-gamma-(L-lysyl)-L-glutamate + H2O = [amino-group carrier protein]-C-terminal-L-glutamate + L-lysine. It participates in amino-acid biosynthesis; L-lysine biosynthesis via AAA pathway; L-lysine from L-alpha-aminoadipate (Thermus route): step 5/5. Functionally, catalyzes the release of L-lysine from [LysW]-gamma-L-lysine. This chain is [LysW]-lysine hydrolase, found in Thermus thermophilus (strain ATCC 27634 / DSM 579 / HB8).